The primary structure comprises 503 residues: Maturase K (503 aa).

Belongs to the intron maturase 2 family. MatK subfamily.

The protein resides in the plastid. Its subcellular location is the chloroplast. Its function is as follows. Usually encoded in the trnK tRNA gene intron. Probably assists in splicing its own and other chloroplast group II introns. The polypeptide is Maturase K (Rubus ursinus (California blackberry)).